A 78-amino-acid chain; its full sequence is Gas vesicle protein A (78 aa).

Positions 9 to 19 (LAEVLDRVLDK) are alpha helix 1. Positions 23 to 31 (VDVWARISL) are beta-strand 1. A beta turn region spans residues 32-34 (VGI). The interval 35 to 43 (EILTVEARV) is beta-strand 2. The segment at 48-67 (VDTFLHYAEEIAKIEQAELT) is alpha helix 2.

This sequence belongs to the gas vesicle GvpA family. As to quaternary structure, the gas vesicle shell is 2 nm thick and consists of a single layer of this protein. It forms helical ribs nearly perpendicular to the long axis of the vesicle. Modeled as antiparallel homodimers.

It is found in the gas vesicle shell. Functionally, gas vesicles are hollow, gas filled proteinaceous nanostructures found in some microorganisms. During planktonic growth they allow positioning of the organism at a favorable depth for light or nutrient acquisition. GvpA forms the protein shell. This gene replaces p-gvpA of H.salinarum very poorly, only about 1% of GVs are formed; the few gas vesicles formed are quite strong with a very high critical collapse pressure (CCP) of 0.213 MPa. In terms of biological role, expression of a 9.5 kb mc-vac DNA fragment containing 2 divergently transcribed regions (gvpD-gvpE-gvpF-gvpG-gvpH-gvpI-gvpJ-gvpK-gvpL-gvpM and gvpA-gvpC-gvpN-gvpO) allows H.volcanii to produce gas vesicles. The protein is Gas vesicle protein A of Haloferax mediterranei (strain ATCC 33500 / DSM 1411 / JCM 8866 / NBRC 14739 / NCIMB 2177 / R-4) (Halobacterium mediterranei).